The following is a 490-amino-acid chain: Bifunctional protein HldE (490 aa).

Residues 1-330 (MSRFDTLLQS…RKILPHASLA (330 aa)) are ribokinase. 205-208 (NRKE) serves as a coordination point for ATP. Aspartate 275 is a catalytic residue. The interval 358 to 490 (FTNGCFDILH…LVEKAREGTT (133 aa)) is cytidylyltransferase.

It in the N-terminal section; belongs to the carbohydrate kinase PfkB family. In the C-terminal section; belongs to the cytidylyltransferase family. As to quaternary structure, homodimer.

It carries out the reaction D-glycero-beta-D-manno-heptose 7-phosphate + ATP = D-glycero-beta-D-manno-heptose 1,7-bisphosphate + ADP + H(+). The enzyme catalyses D-glycero-beta-D-manno-heptose 1-phosphate + ATP + H(+) = ADP-D-glycero-beta-D-manno-heptose + diphosphate. The protein operates within nucleotide-sugar biosynthesis; ADP-L-glycero-beta-D-manno-heptose biosynthesis; ADP-L-glycero-beta-D-manno-heptose from D-glycero-beta-D-manno-heptose 7-phosphate: step 1/4. It participates in nucleotide-sugar biosynthesis; ADP-L-glycero-beta-D-manno-heptose biosynthesis; ADP-L-glycero-beta-D-manno-heptose from D-glycero-beta-D-manno-heptose 7-phosphate: step 3/4. Catalyzes the phosphorylation of D-glycero-D-manno-heptose 7-phosphate at the C-1 position to selectively form D-glycero-beta-D-manno-heptose-1,7-bisphosphate. In terms of biological role, catalyzes the ADP transfer from ATP to D-glycero-beta-D-manno-heptose 1-phosphate, yielding ADP-D-glycero-beta-D-manno-heptose. The chain is Bifunctional protein HldE from Rhodopseudomonas palustris (strain BisB5).